The following is a 492-amino-acid chain: Glutamyl-tRNA(Gln) amidotransferase subunit A (492 aa).

Catalysis depends on charge relay system residues Lys-78 and Ser-158. Residue Ser-182 is the Acyl-ester intermediate of the active site.

This sequence belongs to the amidase family. GatA subfamily. In terms of assembly, heterotrimer of A, B and C subunits.

The catalysed reaction is L-glutamyl-tRNA(Gln) + L-glutamine + ATP + H2O = L-glutaminyl-tRNA(Gln) + L-glutamate + ADP + phosphate + H(+). In terms of biological role, allows the formation of correctly charged Gln-tRNA(Gln) through the transamidation of misacylated Glu-tRNA(Gln) in organisms which lack glutaminyl-tRNA synthetase. The reaction takes place in the presence of glutamine and ATP through an activated gamma-phospho-Glu-tRNA(Gln). In Rhodopseudomonas palustris (strain HaA2), this protein is Glutamyl-tRNA(Gln) amidotransferase subunit A.